The chain runs to 338 residues: Tetraacyldisaccharide 4'-kinase (338 aa).

67 to 74 contacts ATP; the sequence is IAGGAGKT.

Belongs to the LpxK family.

It catalyses the reaction a lipid A disaccharide + ATP = a lipid IVA + ADP + H(+). It participates in glycolipid biosynthesis; lipid IV(A) biosynthesis; lipid IV(A) from (3R)-3-hydroxytetradecanoyl-[acyl-carrier-protein] and UDP-N-acetyl-alpha-D-glucosamine: step 6/6. Its function is as follows. Transfers the gamma-phosphate of ATP to the 4'-position of a tetraacyldisaccharide 1-phosphate intermediate (termed DS-1-P) to form tetraacyldisaccharide 1,4'-bis-phosphate (lipid IVA). The polypeptide is Tetraacyldisaccharide 4'-kinase (Acidovorax sp. (strain JS42)).